Consider the following 385-residue polypeptide: Multidrug export protein AcrE (385 aa).

An N-terminal signal peptide occupies residues 1–23 (MTKHARFFLLPSFILISAALIAG). C24 carries N-palmitoyl cysteine lipidation. C24 is lipidated: S-diacylglycerol cysteine. The interval 366–385 (ARPGEQVKATTDTPADTASK) is disordered. Over residues 373–385 (KATTDTPADTASK) the composition is skewed to polar residues.

Belongs to the membrane fusion protein (MFP) (TC 8.A.1) family. Part of the tripartite efflux system AcrEF-TolC, which is composed of an inner membrane transporter, AcrF, a periplasmic membrane fusion protein, AcrE, and an outer membrane component, TolC. The complex forms a large protein conduit and can translocate molecules across both the inner and outer membranes.

Its subcellular location is the cell inner membrane. Its function is as follows. Part of the tripartite efflux system AcrEF-TolC. Involved in the efflux of indole and organic solvents. This is Multidrug export protein AcrE (acrE) from Escherichia coli (strain K12).